The following is a 261-amino-acid chain: Acyl-[acyl-carrier-protein]--UDP-N-acetylglucosamine O-acyltransferase (261 aa).

It belongs to the transferase hexapeptide repeat family. LpxA subfamily. Homotrimer.

The protein resides in the cytoplasm. It catalyses the reaction a (3R)-hydroxyacyl-[ACP] + UDP-N-acetyl-alpha-D-glucosamine = a UDP-3-O-[(3R)-3-hydroxyacyl]-N-acetyl-alpha-D-glucosamine + holo-[ACP]. It functions in the pathway glycolipid biosynthesis; lipid IV(A) biosynthesis; lipid IV(A) from (3R)-3-hydroxytetradecanoyl-[acyl-carrier-protein] and UDP-N-acetyl-alpha-D-glucosamine: step 1/6. Its function is as follows. Involved in the biosynthesis of lipid A, a phosphorylated glycolipid that anchors the lipopolysaccharide to the outer membrane of the cell. This Trichlorobacter lovleyi (strain ATCC BAA-1151 / DSM 17278 / SZ) (Geobacter lovleyi) protein is Acyl-[acyl-carrier-protein]--UDP-N-acetylglucosamine O-acyltransferase.